The primary structure comprises 157 residues: Ribosome-binding factor A (157 aa).

Positions 127 to 157 are disordered; it reads QQQFGSEEASVEDEVLGDDVADDADETEGKD. A compositionally biased stretch (acidic residues) spans 135-157; it reads ASVEDEVLGDDVADDADETEGKD.

It belongs to the RbfA family. Monomer. Binds 30S ribosomal subunits, but not 50S ribosomal subunits or 70S ribosomes.

The protein resides in the cytoplasm. Its function is as follows. One of several proteins that assist in the late maturation steps of the functional core of the 30S ribosomal subunit. Associates with free 30S ribosomal subunits (but not with 30S subunits that are part of 70S ribosomes or polysomes). Required for efficient processing of 16S rRNA. May interact with the 5'-terminal helix region of 16S rRNA. This is Ribosome-binding factor A from Shewanella baltica (strain OS195).